The sequence spans 82 residues: Penaeidin-3a (82 aa).

The N-terminal stretch at Met-1 to Gly-19 is a signal peptide. Pyrrolidone carboxylic acid is present on Gln-20. Intrachain disulfides connect Cys-51–Cys-66, Cys-55–Cys-73, and Cys-67–Cys-74. A Serine amide modification is found at Ser-81.

The N-terminus forms pyrrolidone carboxylic acid. In terms of tissue distribution, higher expression in hemocytes and to a lesser extent in heart, testis, gills, intestine, lymphoid organ and hepatopancreas. Traces in eyes and subcuticular epithelium. Not present in the brain.

Its subcellular location is the cytoplasmic granule. Functionally, antibacterial activity against M.luteus and E.coli bacteria. Antifungal activity against N.crassa and F.oxysporum. Presents chitin-binding activity. The polypeptide is Penaeidin-3a (Penaeus vannamei (Whiteleg shrimp)).